We begin with the raw amino-acid sequence, 338 residues long: Anthranilate phosphoribosyltransferase (338 aa).

5-phospho-alpha-D-ribose 1-diphosphate is bound by residues glycine 81, 84 to 85 (GD), threonine 89, 91 to 94 (NIST), 109 to 117 (KHGNRNLSS), and alanine 121. Glycine 81 is a binding site for anthranilate. Serine 93 is a Mg(2+) binding site. Asparagine 112 contacts anthranilate. Position 167 (arginine 167) interacts with anthranilate. 2 residues coordinate Mg(2+): aspartate 226 and glutamate 227.

This sequence belongs to the anthranilate phosphoribosyltransferase family. As to quaternary structure, homodimer. Mg(2+) is required as a cofactor.

It catalyses the reaction N-(5-phospho-beta-D-ribosyl)anthranilate + diphosphate = 5-phospho-alpha-D-ribose 1-diphosphate + anthranilate. It participates in amino-acid biosynthesis; L-tryptophan biosynthesis; L-tryptophan from chorismate: step 2/5. Functionally, catalyzes the transfer of the phosphoribosyl group of 5-phosphorylribose-1-pyrophosphate (PRPP) to anthranilate to yield N-(5'-phosphoribosyl)-anthranilate (PRA). This Cereibacter sphaeroides (strain ATCC 17023 / DSM 158 / JCM 6121 / CCUG 31486 / LMG 2827 / NBRC 12203 / NCIMB 8253 / ATH 2.4.1.) (Rhodobacter sphaeroides) protein is Anthranilate phosphoribosyltransferase.